Here is a 151-residue protein sequence, read N- to C-terminus: Ribosome-binding factor A (151 aa).

The tract at residues 116–151 (DAEVARAAANARPAGDPDPYREPRPADDDDEDDEDE) is disordered. Residues 120–129 (ARAAANARPA) show a composition bias toward low complexity. Residues 142-151 (DDDDEDDEDE) are compositionally biased toward acidic residues.

This sequence belongs to the RbfA family. In terms of assembly, monomer. Binds 30S ribosomal subunits, but not 50S ribosomal subunits or 70S ribosomes.

It is found in the cytoplasm. One of several proteins that assist in the late maturation steps of the functional core of the 30S ribosomal subunit. Associates with free 30S ribosomal subunits (but not with 30S subunits that are part of 70S ribosomes or polysomes). Required for efficient processing of 16S rRNA. May interact with the 5'-terminal helix region of 16S rRNA. This is Ribosome-binding factor A from Thermobifida fusca (strain YX).